Here is a 716-residue protein sequence, read N- to C-terminus: Phenylalanine/tyrosine ammonia-lyase (716 aa).

Y110 serves as the catalytic Proton donor/acceptor. Residues 211 to 213 constitute a cross-link (5-imidazolinone (Ala-Gly)); it reads ASG. Position 212 is a 2,3-didehydroalanine (Ser) (S212). The (E)-cinnamate site is built by N270, Q360, R366, N397, K468, E496, and N499.

The protein belongs to the PAL/histidase family. In terms of assembly, homotetramer. Dimer of dimers. Post-translationally, contains an active site 4-methylidene-imidazol-5-one (MIO), which is formed autocatalytically by cyclization and dehydration of residues Ala-Ser-Gly.

The protein resides in the cytoplasm. The catalysed reaction is L-phenylalanine = (E)-cinnamate + NH4(+). It carries out the reaction L-tyrosine = (E)-4-coumarate + NH4(+). It functions in the pathway phenylpropanoid metabolism; trans-cinnamate biosynthesis; trans-cinnamate from L-phenylalanine: step 1/1. Catalyzes the non-oxidative deamination of L-phenylalanine and L-tyrosine to form trans-cinnamic acid and p-coumaric acid respectively with similar efficiencies. Facilitates the commitment step in phenylpropanoid pathways that produce secondary metabolites such as lignins, coumarins and flavonoids. This Rhodotorula toruloides (Yeast) protein is Phenylalanine/tyrosine ammonia-lyase (PAL).